The following is a 514-amino-acid chain: piRNA biogenesis protein EXD1 (514 aa).

In terms of domain architecture, 3'-5' exonuclease spans 30-122; sequence LHAERTWMEK…HGKLCWLQVA (93 aa). The tract at residues 384-422 is disordered; the sequence is SLNKQATNPQHLPPTEEGETSEDSSNKLICTKSKGSEDQ.

The protein belongs to the EXD1 family. In terms of assembly, homodimer. Component of the PET complex, at least composed of EXD1, PIWIL2, TDRD12 and piRNAs.

The protein localises to the cytoplasm. Its function is as follows. RNA-binding component of the PET complex, a multiprotein complex required for the processing of piRNAs during spermatogenesis. The piRNA metabolic process mediates the repression of transposable elements during meiosis by forming complexes composed of piRNAs and Piwi proteins and governs the methylation and subsequent repression of transposable elements, preventing their mobilization, which is essential for the germline integrity. The PET complex is required during the secondary piRNAs metabolic process for the PIWIL2 slicing-triggered loading of PIWIL4 piRNAs. In the PET complex, EXD1 probably acts as an RNA adapter. EXD1 is an inactive exonuclease. This Homo sapiens (Human) protein is piRNA biogenesis protein EXD1 (EXD1).